The primary structure comprises 87 residues: UPF0250 protein YE3006 (87 aa).

Belongs to the UPF0250 family.

The chain is UPF0250 protein YE3006 from Yersinia enterocolitica serotype O:8 / biotype 1B (strain NCTC 13174 / 8081).